Here is a 229-residue protein sequence, read N- to C-terminus: Choline-phosphate cytidylyltransferase (229 aa).

Leu-6, Ala-8, Gly-9, Tyr-80, Asn-82, Ser-85, and Ala-101 together coordinate CDP-choline. Asp-102 contacts Mg(2+). Tyr-185 is a binding site for CDP-choline. Mg(2+)-binding residues include Glu-211 and Asp-213.

The protein belongs to the LicC/PntC cytidylyltransferase family. As to quaternary structure, monomer. Forms dimers in LicC-CDP-Cho-Mg(2+) crystals, but the monomer is probably the biologically functional unit. Mg(2+) serves as cofactor.

The enzyme catalyses phosphocholine + CTP + H(+) = CDP-choline + diphosphate. The protein operates within cell wall biogenesis; teichoic acid biosynthesis. It functions in the pathway cell wall biogenesis; lipoteichoic acid biosynthesis. Mg(2+) in slight excess of CTP gives maximal activity. Strongly inhibited by Ca(2+) and several other metal ions, such as Cd(2+), Co(2+), Cu(2+), Mn(2+), Ni(2+), Zn(2+) and Fe(2+). Also inhibited by Mg(2+) at high concentrations. CDP-Cho is a competitive inhibitor with respect to CTP, whereas diphosphate is a mixed-type inhibitor with respect to CTP. Cytidylyltransferase involved in the biosynthesis of the phosphocholine containing cell wall constituents, teichoic acid and lipoteichoic acid, which are essential for cell separation and pathogenesis. Catalyzes the activation of phosphocholine (P-Cho) to CDP-choline (CDP-Cho). Can also use phosphoethanolamine and 2-aminoethylphosphonate, with much lower efficiency. Shows lower activity with dCTP, weak activity with ATP and no activity with GTP, TTP, UTP, dATP, dGTP and dTTP. The sequence is that of Choline-phosphate cytidylyltransferase from Streptococcus pneumoniae (strain ATCC BAA-255 / R6).